The following is a 349-amino-acid chain: Phosphorylcholine phosphatase (349 aa).

The signal sequence occupies residues 1-22; that stretch reads MTFAKGILAALALAAAVGQASA. Asp-53 functions as the Nucleophile in the catalytic mechanism. 2 residues coordinate Mg(2+): Asp-53 and Asp-55. Asp-55 acts as the Proton donor in catalysis. A disulfide bridge connects residues Cys-109 and Cys-116. Mg(2+) is bound at residue Asp-284.

This sequence belongs to the HAD-like hydrolase superfamily. In terms of assembly, monomer. Homodimer. Homotetramer. The cofactor is Mg(2+).

Its subcellular location is the periplasm. The enzyme catalyses phosphocholine + H2O = choline + phosphate. The catalysed reaction is phosphoethanolamine + H2O = ethanolamine + phosphate. With respect to regulation, activity is inhibited by high concentrations of phosphorylcholine, phosphorylethanolamine, choline or betaine. Displays different properties depending on the substrate utilized, the pH conditions as well as the presence or absence of metal ions. At pH 5, activity is inhibited by Al(3+) ions. At pH 7.4, the enzyme cannot catalyze the hydrolysis of pNPP, phosphorylethanolamine is a poor substrate in either the presence or absence of divalent cations, and activity measured with phosphorylcholine is independent of divalent cations or is not inhibited by Al(3+) ions. Mg(2+) produces identical activation at pH 5.0 and 7.4, but Zn(2+) is an activator at pH 5.0 and becomes an inhibitor at pH 7.4. This inhibition at pH 7.4 may be due to a transition from octahedral to tetrahedral coordination geometry, which is produced by hydrolysis of the Zn-hexacoordinated complex. In terms of biological role, catalyzes the hydrolysis of phosphorylcholine (PCho) to produce choline and inorganic phosphate. Can also hydrolyze phosphorylethanolamine and the nonphysiological substrate p-nitrophenylphosphate (pNPP). Shows higher affinity and catalytic efficiency with phosphorylcholine as substrate. Is probably involved in virulence. The bacteria may break down various host compounds or host cell membranes through the coordinated action of phospholipase C and phosphocholine phosphatase. The final consequence of the action of these enzymes is an increase of the free choline concentration, which may promote the pathogenicity of P.aeruginosa. The sequence is that of Phosphorylcholine phosphatase from Pseudomonas aeruginosa (strain ATCC 15692 / DSM 22644 / CIP 104116 / JCM 14847 / LMG 12228 / 1C / PRS 101 / PAO1).